The following is a 39-amino-acid chain: ORF8a protein (39 aa).

An N-terminal signal peptide occupies residues 1–15; sequence MKLLIVLTCISLCSC. Residues 16–39 form the SARS ORF8 Ig-like domain; the sequence is ICTVVQRCASNKPHVLEDPCKVQH.

The sequence is that of ORF8a protein from Homo sapiens (Human).